The primary structure comprises 660 residues: DNA ligase (660 aa).

NAD(+)-binding positions include 32 to 36 (DEVYD), 81 to 82 (SM), and Glu112. Lys114 serves as the catalytic N6-AMP-lysine intermediate. NAD(+)-binding residues include Arg135, Glu169, Lys284, and Lys308. Zn(2+) contacts are provided by Cys402, Cys405, Cys418, and Cys423. The region spanning 578–660 (VENSPLAHKT…ELLKEAGIEA (83 aa)) is the BRCT domain.

Belongs to the NAD-dependent DNA ligase family. LigA subfamily. Mg(2+) serves as cofactor. The cofactor is Mn(2+).

It carries out the reaction NAD(+) + (deoxyribonucleotide)n-3'-hydroxyl + 5'-phospho-(deoxyribonucleotide)m = (deoxyribonucleotide)n+m + AMP + beta-nicotinamide D-nucleotide.. DNA ligase that catalyzes the formation of phosphodiester linkages between 5'-phosphoryl and 3'-hydroxyl groups in double-stranded DNA using NAD as a coenzyme and as the energy source for the reaction. It is essential for DNA replication and repair of damaged DNA. The sequence is that of DNA ligase from Nitratiruptor sp. (strain SB155-2).